We begin with the raw amino-acid sequence, 130 residues long: Albumin-1 B (130 aa).

Residues 1–26 form the signal peptide; the sequence is MASVKLASLMVLFATLGMFLTKNVGA. Intrachain disulfides connect cysteine 29-cysteine 46, cysteine 33-cysteine 48, and cysteine 41-cysteine 58. 2 propeptides span residues 64–69 and 123–130; these read VFLRTN and LLKSVSTA.

The C-terminal glycine may be removed from PA1b. As to expression, major component of both the cotyledons and embryonic axes of mature seeds.

In terms of biological role, PA1b binds to basic 7S globulin (BG) and stimulates its phosphorylation activity. Involved in the signal transduction system to regulate the growth and differentiation as a hormone peptide. Toxic to various insects through binding to a high affinity binding site in the insect gut. In Pisum sativum (Garden pea), this protein is Albumin-1 B.